Here is a 302-residue protein sequence, read N- to C-terminus: Lactoylglutathione lyase (302 aa).

VOC domains are found at residues 11–153 (KLNH…LVSQ) and 166–301 (RFNH…VIEQ). H14 serves as a coordination point for Zn(2+). R18 is a substrate binding site. E75 provides a ligand contact to Zn(2+). Positions 79, 99, and 103 each coordinate substrate. H103 and E149 together coordinate Zn(2+). The Proton donor/acceptor role is filled by E149.

The protein belongs to the glyoxalase I family. In terms of assembly, monomer. The cofactor is Zn(2+). It depends on Cu(2+) as a cofactor. Ni(2+) serves as cofactor. Mn(2+) is required as a cofactor.

The enzyme catalyses (R)-S-lactoylglutathione = methylglyoxal + glutathione. The protein operates within secondary metabolite metabolism; methylglyoxal degradation; (R)-lactate from methylglyoxal: step 1/2. Catalyzes the conversion of hemimercaptal, formed from methylglyoxal and glutathione, to S-lactoylglutathione. The chain is Lactoylglutathione lyase (glo1) from Schizosaccharomyces pombe (strain 972 / ATCC 24843) (Fission yeast).